The primary structure comprises 202 residues: Capsid protein (202 aa).

This sequence belongs to the tymoviruses capsid protein family.

It is found in the virion. In terms of biological role, self-assembles to form a T=3 icosahedral capsid composed of 180 copies of the capsid protein. The capsid encapsulates the single-stranded RNA genome. The chain is Capsid protein from Erysimum (ELV).